The primary structure comprises 274 residues: Protein bax (274 aa).

Polar residues predominate over residues 32-64; it reads TTASQKSHLTKASNKQVSSKQEYSRNSAKSSSL. The interval 32 to 74 is disordered; it reads TTASQKSHLTKASNKQVSSKQEYSRNSAKSSSLPDLRKYPSGT. An ATP-binding site is contributed by 247 to 254; the sequence is GYSTKGKS.

This chain is Protein bax (bax), found in Escherichia coli (strain K12).